The following is a 574-amino-acid chain: Membralin (574 aa).

A disordered region spans residues 1 to 27; sequence MSEHAAAPGPGPNGGGGGGAAPVRGPR. Ser-2 carries the post-translational modification N-acetylserine. A helical transmembrane segment spans residues 69-89; sequence FFVLLKALFVLFVLAYIHIVF. A glycan (N-linked (GlcNAc...) asparagine) is linked at Asn-180. The next 3 helical transmembrane spans lie at 293 to 313, 337 to 357, and 417 to 437; these read TSYLAAFVIMVIFTLSVSMLL, IAFPAAPLLTVILALVGMEAI, and YSSLALVTSWLFIQHSMIYFF. Low complexity-rich tracts occupy residues 461–470 and 491–501; these read LGPGTPTALP and LGPSSSPAPTG. Disordered stretches follow at residues 461–515 and 546–574; these read LGPG…GASV and RRPTAPSTPDSSRPDPGVPLEDAPAPAGS.

Belongs to the membralin family. In terms of assembly, interacts with ERLIN2. Detected in brain, spinal cord, lung, liver and kidney.

The protein resides in the endoplasmic reticulum membrane. May have a role in the ERAD pathway required for clearance of misfolded proteins in the endoplasmic reticulum (ER). Promotes survival of motor neurons, probably by protecting against ER stress. The sequence is that of Membralin (Tmem259) from Mus musculus (Mouse).